Consider the following 971-residue polypeptide: Isoleucine--tRNA ligase (971 aa).

The 'HIGH' region motif lies at 64–74 (PYANGHIHIGH). Glu-602 lines the L-isoleucyl-5'-AMP pocket. Positions 643 to 647 (KMSKS) match the 'KMSKS' region motif. Lys-646 contributes to the ATP binding site.

Belongs to the class-I aminoacyl-tRNA synthetase family. IleS type 1 subfamily. As to quaternary structure, monomer.

It is found in the cytoplasm. The catalysed reaction is tRNA(Ile) + L-isoleucine + ATP = L-isoleucyl-tRNA(Ile) + AMP + diphosphate. Functionally, catalyzes the attachment of isoleucine to tRNA(Ile). As IleRS can inadvertently accommodate and process structurally similar amino acids such as valine, to avoid such errors it has two additional distinct tRNA(Ile)-dependent editing activities. One activity is designated as 'pretransfer' editing and involves the hydrolysis of activated Val-AMP. The other activity is designated 'posttransfer' editing and involves deacylation of mischarged Val-tRNA(Ile). This Bartonella quintana (strain Toulouse) (Rochalimaea quintana) protein is Isoleucine--tRNA ligase.